Here is a 327-residue protein sequence, read N- to C-terminus: GMP reductase (327 aa).

The Thioimidate intermediate role is filled by Cys-176. 205 to 228 contributes to the NADP(+) binding site; it reads IIADGGIRTHGDIAKSIRFGATMV.

The protein belongs to the IMPDH/GMPR family. GuaC type 2 subfamily.

It catalyses the reaction IMP + NH4(+) + NADP(+) = GMP + NADPH + 2 H(+). Its function is as follows. Catalyzes the irreversible NADPH-dependent deamination of GMP to IMP. It functions in the conversion of nucleobase, nucleoside and nucleotide derivatives of G to A nucleotides, and in maintaining the intracellular balance of A and G nucleotides. The protein is GMP reductase of Streptococcus equi subsp. zooepidemicus (strain H70).